The following is a 577-amino-acid chain: Isocitrate dehydrogenase kinase/phosphatase (577 aa).

ATP contacts are provided by residues 315 to 321 and Lys336; that span reads APGIRGM. Asp371 is an active-site residue.

Belongs to the AceK family.

It localises to the cytoplasm. It catalyses the reaction L-seryl-[isocitrate dehydrogenase] + ATP = O-phospho-L-seryl-[isocitrate dehydrogenase] + ADP + H(+). Its function is as follows. Bifunctional enzyme which can phosphorylate or dephosphorylate isocitrate dehydrogenase (IDH) on a specific serine residue. This is a regulatory mechanism which enables bacteria to bypass the Krebs cycle via the glyoxylate shunt in response to the source of carbon. When bacteria are grown on glucose, IDH is fully active and unphosphorylated, but when grown on acetate or ethanol, the activity of IDH declines drastically concomitant with its phosphorylation. The polypeptide is Isocitrate dehydrogenase kinase/phosphatase (Escherichia fergusonii (strain ATCC 35469 / DSM 13698 / CCUG 18766 / IAM 14443 / JCM 21226 / LMG 7866 / NBRC 102419 / NCTC 12128 / CDC 0568-73)).